The sequence spans 407 residues: M protein, serotype 2.1 (407 aa).

The first 41 residues, 1–41 (MARKDTNKQYSLRKLKTGTASVAVAVAVLGAGFANQTTVKA), serve as a signal peptide directing secretion. A 2 X 7 AA tandem repeats region spans residues 81–94 (VEEEHKKVEEEHKK). Composition is skewed to basic and acidic residues over residues 83–144 (EEHK…KRYQ), 152–229 (QLEK…EKQI), 237–264 (LSRD…EKQI), and 272–288 (LSRD…KVEA). Residues 83–289 (EEHKKVEEEH…REAKKKVEAD (207 aa)) are disordered. 4 C repeats span residues 151–185 (QQLE…EAEH), 186–220 (QKLK…EAEH), 221–255 (QKLK…EAEH), and 256–290 (QKLK…EADL). D repeat units follow at residues 323 to 328 (AKLEAE), 329 to 334 (AKALKE), 337 to 342 (AKQAEE), and 344 to 349 (AKLKGN). The tract at residues 344 to 382 (AKLKGNQTPNAKVAPQANRSRSAMTQQKRTLPSTGETAN) is disordered. The span at 360–380 (ANRSRSAMTQQKRTLPSTGET) shows a compositional bias: polar residues. The LPXTG sorting signal motif lies at 374–378 (LPSTG). Pentaglycyl murein peptidoglycan amidated threonine is present on T377. Residues 378 to 407 (GETANPFFTAAAATVMVSAGMLALKRKEEN) constitute a propeptide, removed by sortase.

This sequence belongs to the M protein family.

The protein localises to the secreted. It is found in the cell wall. In terms of biological role, this protein is one of the different antigenic serotypes of protein M. Protein M is closely associated with virulence of the bacterium and can render the organism resistant to phagocytosis. The protein is M protein, serotype 2.1 (emmL2.1) of Streptococcus pyogenes.